Here is a 224-residue protein sequence, read N- to C-terminus: Late embryogenesis abundant protein, group 3 (224 aa).

Disordered stretches follow at residues 1 to 169 and 193 to 224; these read MASN…KDKT and NTLGMGGDNTITTKDNTTGATTKDTTTTTRNH. Basic and acidic residues predominate over residues 13–23; the sequence is GETKARNEEKT. 5 tandem repeats follow at residues 26–36, 37–47, 48–58, 59–69, and 70–80. The segment at 26–153 is 12 X 11 AA tandem repeats; that stretch reads VMGATKDKAG…TEAAKQKASE (128 aa). Basic and acidic residues-rich tracts occupy residues 41–85, 92–109, and 120–151; these read TKQK…KDKT, AKEKTYETAQSAKERAAQ, and EKTEAAKQKAAETTEAARQKAAEATEAAKQKA. Residues 81 to 87 form a 6; truncated repeat; that stretch reads AKDKTAQ. A run of 5 repeats spans residues 88–98, 99–109, 121–131, 132–142, and 143–153. Residues 200–224 show a composition bias toward low complexity; the sequence is DNTITTKDNTTGATTKDTTTTTRNH.

It belongs to the LEA type 4 family.

The polypeptide is Late embryogenesis abundant protein, group 3 (Triticum aestivum (Wheat)).